The chain runs to 346 residues: mRNA endoribonuclease LsoA (346 aa).

Can form a complex with cognate antitoxin LsoB and with enterobacteria phage T4 antitoxin Dmd.

Its function is as follows. Toxic component of a type II toxin-antitoxin (TA) system. A stable (half-life over 20 minutes) endoribonuclease that degrades mRNA. Degradation may be translation-stimulated. Overexpression in the absence of cognate antitoxin LsoB causes retarded growth and mRNA degradation, this effect is mitigated upon coexpression with antitoxin LsoB or enterobacteria phage T4 Dmd. Degrades late enterobacteria phage T4 mRNAs, protecting the host against T4 reproduction. This chain is mRNA endoribonuclease LsoA (lsoA), found in Escherichia coli O157:H7.